Here is a 1075-residue protein sequence, read N- to C-terminus: Ataxin-2-like protein (1075 aa).

N-acetylmethionine is present on methionine 1. The segment covering 1-12 (MLKPQPLQQPSQ) has biased composition (low complexity). Positions 1–115 (MLKPQPLQQP…KGPPQSPVFE (115 aa)) are disordered. The tract at residues 98–121 (SARGQSTGKGPPQSPVFEGVYNNS) is interaction with MPL. Phosphoserine is present on residues serine 103 and serine 111. Tyrosine 118 is subject to Phosphotyrosine. The Sm domain occupies 122-199 (RMLHFLTAVV…VMLVHFRNVD (78 aa)). The residue at position 207 (lysine 207) is an N6-acetyllysine. Phosphoserine is present on serine 238. A Phosphotyrosine modification is found at tyrosine 264. The residue at position 306 (serine 306) is a Phosphoserine. Residue tyrosine 309 is modified to Phosphotyrosine. Positions 316-328 (ENDDGRTEEEKHS) are enriched in basic and acidic residues. 6 disordered regions span residues 316 to 521 (ENDD…LEPQ), 551 to 697 (QFKL…SIPV), 733 to 770 (VSNS…MMQA), 820 to 849 (SNPR…EQPT), 865 to 940 (ATQL…SSFP), and 1022 to 1045 (PYIG…ADDR). The segment covering 330–342 (VQRQGSGRESPSL) has biased composition (polar residues). Residues serine 335 and serine 339 each carry the phosphoserine modification. Lysine 348 participates in a covalent cross-link: Glycyl lysine isopeptide (Lys-Gly) (interchain with G-Cter in SUMO2). Tyrosine 349 is modified (phosphotyrosine). Arginine 361 carries the post-translational modification Asymmetric dimethylarginine. Residues 363–380 (GVRCSSSRGGRPGLSSLP) are compositionally biased toward low complexity. Phosphoserine is present on residues serine 391 and serine 409. Residues 421 to 433 (TLSSPSNRPSGET) are compositionally biased toward polar residues. Serine 449 carries the phosphoserine modification. Low complexity-rich tracts occupy residues 450–462 (PKSA…SASC) and 471–485 (VPTS…SSVS). 2 positions are modified to phosphoserine: serine 493 and serine 496. Over residues 505–516 (DVKELSTKEPGR) the composition is skewed to basic and acidic residues. Phosphoserine occurs at positions 557, 558, 559, and 563. Residues 571–584 (ILKEEPKGKEKEVD) show a composition bias toward basic and acidic residues. Phosphoserine is present on serine 594. Threonine 632 is modified (phosphothreonine). 4 positions are modified to phosphoserine: serine 634, serine 674, serine 680, and serine 684. Low complexity-rich tracts occupy residues 678 to 694 (STST…STPS) and 761 to 770 (PASAPPMMQA). Positions 874 to 898 (QPATTPTGSQPQSQHAAPSPVQHQA) are enriched in polar residues. Low complexity-rich tracts occupy residues 931–940 (SAQSPQSSFP) and 1025–1037 (GHPQ…QAPG).

The protein belongs to the ataxin-2 family. In terms of assembly, interacts with MPL/TPOR and EPOR and dissociates after ligand stimulation. Interacts with DDX6, G3BP1, and ATXN2. Interacts with PRMT1. Interacts with CIC and ATXN1. Thrombopoietin triggers the phosphorylation on tyrosine residues in a way that is dependent on MPL C-terminal domain. In terms of processing, asymmetrically dimethylated. Probably methylated by PRMT1. In terms of tissue distribution, expressed at high levels in thymus, lymph node, spleen, fetal kidney and adult testis. Constitutively associated with MPL and EPOR in hematopoietic cells.

Its subcellular location is the membrane. The protein resides in the cytoplasm. The protein localises to the nucleus speckle. It is found in the cytoplasmic granule. Functionally, involved in the regulation of stress granule and P-body formation. In Homo sapiens (Human), this protein is Ataxin-2-like protein (ATXN2L).